Reading from the N-terminus, the 294-residue chain is MKDRADAAARDRYAVAGHPVEHSRSPFIHARFAALTGEPIDYGRLPCPLDGFAATVSAFAASTGTGLGPARGCNVTVPFKFEAVALAAQLTPRAALAQAANTLRFDAEGWQADNTDGAGLVRDITVHAGVALQGATLLLVGAGGAAAGVLGPLLETGPQRLVLANRSPDRARTLVERHAALAALHGVTLEAAALDDCGDGYDIVVNATAASLAGATVPVTARVLRPGALALDMMYGPAAQGFLRWAAAHGAHGRDGLGMLVEQAAESFWFWRGVRPPTPAVLAELRAVIEGADT.

Shikimate contacts are provided by residues 23–25 (SRS) and threonine 76. Lysine 80 (proton acceptor) is an active-site residue. Shikimate-binding residues include asparagine 101 and aspartate 116. NADP(+) contacts are provided by residues 141–145 (GAGGA) and methionine 233. Tyrosine 235 serves as a coordination point for shikimate. Residue glycine 256 participates in NADP(+) binding.

This sequence belongs to the shikimate dehydrogenase family. In terms of assembly, homodimer.

It catalyses the reaction shikimate + NADP(+) = 3-dehydroshikimate + NADPH + H(+). Its pathway is metabolic intermediate biosynthesis; chorismate biosynthesis; chorismate from D-erythrose 4-phosphate and phosphoenolpyruvate: step 4/7. In terms of biological role, involved in the biosynthesis of the chorismate, which leads to the biosynthesis of aromatic amino acids. Catalyzes the reversible NADPH linked reduction of 3-dehydroshikimate (DHSA) to yield shikimate (SA). This is Shikimate dehydrogenase (NADP(+)) from Methylibium petroleiphilum (strain ATCC BAA-1232 / LMG 22953 / PM1).